A 176-amino-acid chain; its full sequence is Transmembrane protein 238 (176 aa).

Residues 1–22 (MAAAPAVCASQGSPPGAPSAPA) form a disordered region. Residues 1–36 (MAAAPAVCASQGSPPGAPSAPAAAPAPAAGLGRCRM) are Cytoplasmic-facing. The segment covering 9–22 (ASQGSPPGAPSAPA) has biased composition (low complexity). Residues 37–57 (ALLLAVALDVAGMAALLTGVF) form a helical membrane-spanning segment. The Extracellular segment spans residues 58-69 (AQLQVRGRDFGD). A helical transmembrane segment spans residues 70–90 (LLIYSGALLVFLSLLGWILWY). Topologically, residues 91-176 (TGNIEISRQE…GPGAAGAGSE (86 aa)) are cytoplasmic. Over residues 124 to 137 (SAPAAAGQRPAPGS) the composition is skewed to low complexity. The segment at 124-157 (SAPAAAGQRPAPGSRRARRAARAPPPPAAGSRRV) is disordered. Serine 175 carries the post-translational modification Phosphoserine.

It is found in the membrane. The chain is Transmembrane protein 238 (TMEM238) from Homo sapiens (Human).